Consider the following 911-residue polypeptide: General transcription factor 3C polypeptide 2 (911 aa).

Disordered stretches follow at residues 24–187 (DSPG…RRRA) and 205–297 (ALPA…MAPN). Residues 35–46 (DVKTSSEMTSAE) are compositionally biased toward polar residues. The residue at position 63 (serine 63) is a Phosphoserine. Basic and acidic residues predominate over residues 64-81 (PDQRRLPPEQESLSRLEQ). Basic residues predominate over residues 92–112 (SKPRASKPGRKRGGRTRKGPK). Over residues 114-123 (PQQPNPPSAP) the composition is skewed to pro residues. Phosphoserine is present on residues serine 132, serine 165, serine 167, serine 220, and serine 260. Acidic residues predominate over residues 253 to 262 (EAEDVEESEG). A compositionally biased stretch (low complexity) spans 263-277 (PSESSSEPEPVVPRS). WD repeat units lie at residues 366–426 (PEDG…MNET), 427–483 (HPLS…AWEL), 484–535 (PGTP…IYKV), 536–603 (QCVA…SLKL), 604–654 (YPFQ…NSIK), and 655–690 (RFLSTELAWLLPYNGVTVAQDNCYASYGLCGIHYID). Phosphoserine is present on serine 597. The disordered stretch occupies residues 765–785 (SPEGPDHSSASSGVPNPPKAR). Phosphoserine is present on residues serine 871, serine 892, and serine 893. A disordered region spans residues 889–911 (FQPSSPTRRPGFSPTSHRLLPTP). Phosphothreonine is present on threonine 895. The residue at position 901 (serine 901) is a Phosphoserine.

Part of the TFIIIC subcomplex TFIIIC2, consisting of six subunits, GTF3C1, GTF3C2, GTF3C3, GTF3C4, GTF3C5 and GTF3C6.

It localises to the nucleus. Required for RNA polymerase III-mediated transcription. Component of TFIIIC that initiates transcription complex assembly on tRNA and is required for transcription of 5S rRNA and other stable nuclear and cytoplasmic RNAs. May play a direct role in stabilizing interactions of TFIIIC2 with TFIIIC1. In Homo sapiens (Human), this protein is General transcription factor 3C polypeptide 2 (GTF3C2).